Here is a 428-residue protein sequence, read N- to C-terminus: Enolase (428 aa).

A (2R)-2-phosphoglycerate-binding site is contributed by Gln-163. The active-site Proton donor is the Glu-205. Positions 242, 285, and 312 each coordinate Mg(2+). (2R)-2-phosphoglycerate contacts are provided by Lys-337, Arg-366, Ser-367, and Lys-388. Lys-337 functions as the Proton acceptor in the catalytic mechanism.

This sequence belongs to the enolase family. The cofactor is Mg(2+).

It is found in the cytoplasm. It localises to the secreted. Its subcellular location is the cell surface. The enzyme catalyses (2R)-2-phosphoglycerate = phosphoenolpyruvate + H2O. The protein operates within carbohydrate degradation; glycolysis; pyruvate from D-glyceraldehyde 3-phosphate: step 4/5. Catalyzes the reversible conversion of 2-phosphoglycerate (2-PG) into phosphoenolpyruvate (PEP). It is essential for the degradation of carbohydrates via glycolysis. This Neisseria meningitidis serogroup C / serotype 2a (strain ATCC 700532 / DSM 15464 / FAM18) protein is Enolase.